A 272-amino-acid chain; its full sequence is Sulfate transporter CysZ (272 aa).

Helical transmembrane passes span 29-49 (FVII…WLFI), 66-86 (WLSF…LLLF), 148-168 (IIAL…VPVL), and 219-239 (FVPV…TLMW).

Belongs to the CysZ family.

The protein localises to the cell inner membrane. Functionally, high affinity, high specificity proton-dependent sulfate transporter, which mediates sulfate uptake. Provides the sulfur source for the cysteine synthesis pathway. In Haemophilus influenzae (strain 86-028NP), this protein is Sulfate transporter CysZ.